Consider the following 217-residue polypeptide: Uracil-DNA glycosylase (217 aa).

Asp-62 (proton acceptor) is an active-site residue.

Belongs to the uracil-DNA glycosylase (UDG) superfamily. UNG family.

It is found in the cytoplasm. The catalysed reaction is Hydrolyzes single-stranded DNA or mismatched double-stranded DNA and polynucleotides, releasing free uracil.. Its function is as follows. Excises uracil residues from the DNA which can arise as a result of misincorporation of dUMP residues by DNA polymerase or due to deamination of cytosine. In Streptococcus pyogenes serotype M1, this protein is Uracil-DNA glycosylase.